A 211-amino-acid polypeptide reads, in one-letter code: MLEVPVWIPILAFAVGLGLGLLIPHLQKPFQRFSTVNDIPKEFFEHERTLRGKVVSVTDGDTIRVRHVPWLANGDGDFKGKLTETTLQLRVAGVDCPETAKFGRTGQPFGEEAKAWLKGELQDQVVSFKLLMKDQYSRAVCLVYYGSWAAPMNVSEELLRHGYANIYRQSGAVYGGLLETFEALEAEAREKRVNIWSLDKRETPAQYKARK.

Residues 1–20 (MLEVPVWIPILAFAVGLGLG) form the signal peptide. The short motif at 48 to 51 (RTLR) is the RxLR element. Positions 48–198 (RTLRGKVVSV…REKRVNIWSL (151 aa)) constitute a TNase-like domain. Asp-77 contacts Ca(2+). Arg-90 is an active-site residue. Position 95 (Asp-95) interacts with Ca(2+). Catalysis depends on residues Glu-98 and Arg-138. The N-linked (GlcNAc...) asparagine glycan is linked to Asn-153. Residues 200–211 (KRETPAQYKARK) are binding to the host cell surface.

The protein in the N-terminal section; belongs to the RxLR effector family. In the C-terminal section; belongs to the LCL3 family. Interacts with the host cell surface endoplasmin gp96, in order to get translocated into to host cell. Interacts with the effector Htp1, in order to get released from vesicles into the host cytosol.

It localises to the secreted. The protein localises to the host cytoplasm. The protein resides in the host cytosol. With respect to regulation, the nuclease activity shows a general salt dependency with a clear reduction by magnesium and sulfate ions. In terms of biological role, effector involved in the disease saprolegniosis in salmonids and other freshwater fish, resulting in considerable economic losses in aquaculture. Within the host fish cells, Htp3 is released from vesicles into host cytosol where it degrades nucleic acids. The protein is Endonuclease Htp3 (HTP3) of Saprolegnia parasitica (strain CBS 223.65).